Here is a 402-residue protein sequence, read N- to C-terminus: MTSNPLEQLTIEQLQCRTSMKWRAHPEDVLPLWVAEMDVLLAPTVAEAVHRAVDNGDTGYPYGTTFAEAISEFASQRWQWHDLDVSRTAIVPDVMLGVVEMLRLITDRGDGVIVSPPVYPPFYAFVTHDGRRVLEAPLGRDGRLDLAALQDAFSRARRSSGPNGKVAYLLCNPHNPTGSVHTVAELHGVAELARRFGVRVISDEIHAPLVLSGARFTPYLSIPGAENAFALMSATKGWNLCGLKAAIAIAGREAAADLRRIPKEVSHGPSHLGIIAHTAAFRTGSSWLDALLQGLEANRALLRDLVTKHLPGVRYQRPQGTYLTWLDCRHLGFDEQINEGLAAISDLSGPARWFLDHSRVALTSGHAFGTGGVGHVRVNFATSQAILIEALSRMGRALVNFR.

Residue Lys236 is modified to N6-(pyridoxal phosphate)lysine.

This sequence belongs to the class-II pyridoxal-phosphate-dependent aminotransferase family. MalY/PatB cystathionine beta-lyase subfamily. Pyridoxal 5'-phosphate serves as cofactor.

The enzyme catalyses L,L-cystathionine + H2O = L-homocysteine + pyruvate + NH4(+). It catalyses the reaction an S-substituted L-cysteine + H2O = a thiol + pyruvate + NH4(+). Its pathway is amino-acid biosynthesis; L-methionine biosynthesis via de novo pathway; L-homocysteine from L-cystathionine: step 1/1. The protein is Putative cystathionine beta-lyase of Mycobacterium leprae (strain TN).